Reading from the N-terminus, the 635-residue chain is Biosynthetic arginine decarboxylase (635 aa).

Position 100 is an N6-(pyridoxal phosphate)lysine (Lys-100). A substrate-binding site is contributed by 282–292 (IDIGGGLGVDY).

It belongs to the Orn/Lys/Arg decarboxylase class-II family. SpeA subfamily. Mg(2+) serves as cofactor. It depends on pyridoxal 5'-phosphate as a cofactor.

The enzyme catalyses L-arginine + H(+) = agmatine + CO2. The protein operates within amine and polyamine biosynthesis; agmatine biosynthesis; agmatine from L-arginine: step 1/1. Functionally, catalyzes the biosynthesis of agmatine from arginine. This chain is Biosynthetic arginine decarboxylase, found in Pelobacter propionicus (strain DSM 2379 / NBRC 103807 / OttBd1).